The following is a 392-amino-acid chain: MVRLLISTGEVSGDLQGSLLIQALQREVERRSLPLELMALGGPRMQASGAELLADTAPMGAIGLWEALPLVLPTLRLQSRVDHVLKQRPPDAVVLIDYMGANVRLGHKLRRWFPRVPIIYYIAPQEWAWRFGDGGTTQLLSFTDRILAIFPVEAEFYSQRGAKVTWVGHPLLDTVSVLPDRQQARERLGLKPGQRLLLLLPASRQQELRYLMPTLAKAAALLQQRDQSLEVIVPAGLASFEKSLQEALEAAAVRGRVLSAQQADELKPMLYAAADLALGKSGTVNMEMALRGVPQVVGYKVSRITAFVARHFLRFRVEHISPVNLLLKERLVPELLQDELTAEALVQAAIPLLEDPAQRNEMLEGYRRLRQTLGVPGVTDRAAKEILDLTKT.

It belongs to the LpxB family.

The enzyme catalyses a lipid X + a UDP-2-N,3-O-bis[(3R)-3-hydroxyacyl]-alpha-D-glucosamine = a lipid A disaccharide + UDP + H(+). It participates in bacterial outer membrane biogenesis; LPS lipid A biosynthesis. Functionally, condensation of UDP-2,3-diacylglucosamine and 2,3-diacylglucosamine-1-phosphate to form lipid A disaccharide, a precursor of lipid A, a phosphorylated glycolipid that anchors the lipopolysaccharide to the outer membrane of the cell. This Prochlorococcus marinus (strain MIT 9313) protein is Lipid-A-disaccharide synthase.